Here is a 256-residue protein sequence, read N- to C-terminus: Thiazole synthase (256 aa).

Residue K96 is the Schiff-base intermediate with DXP of the active site. Residues G157, A184–G185, and N206–T207 contribute to the 1-deoxy-D-xylulose 5-phosphate site.

Belongs to the ThiG family. In terms of assembly, homotetramer. Forms heterodimers with either ThiH or ThiS.

The protein resides in the cytoplasm. It catalyses the reaction [ThiS sulfur-carrier protein]-C-terminal-Gly-aminoethanethioate + 2-iminoacetate + 1-deoxy-D-xylulose 5-phosphate = [ThiS sulfur-carrier protein]-C-terminal Gly-Gly + 2-[(2R,5Z)-2-carboxy-4-methylthiazol-5(2H)-ylidene]ethyl phosphate + 2 H2O + H(+). Its pathway is cofactor biosynthesis; thiamine diphosphate biosynthesis. Its function is as follows. Catalyzes the rearrangement of 1-deoxy-D-xylulose 5-phosphate (DXP) to produce the thiazole phosphate moiety of thiamine. Sulfur is provided by the thiocarboxylate moiety of the carrier protein ThiS. In vitro, sulfur can be provided by H(2)S. This Brucella anthropi (strain ATCC 49188 / DSM 6882 / CCUG 24695 / JCM 21032 / LMG 3331 / NBRC 15819 / NCTC 12168 / Alc 37) (Ochrobactrum anthropi) protein is Thiazole synthase.